A 190-amino-acid chain; its full sequence is GTP cyclohydrolase 1 (190 aa).

Zn(2+) is bound by residues cysteine 75, histidine 78, and cysteine 146.

Belongs to the GTP cyclohydrolase I family. Toroid-shaped homodecamer, composed of two pentamers of five dimers.

It carries out the reaction GTP + H2O = 7,8-dihydroneopterin 3'-triphosphate + formate + H(+). Its pathway is cofactor biosynthesis; 7,8-dihydroneopterin triphosphate biosynthesis; 7,8-dihydroneopterin triphosphate from GTP: step 1/1. The protein is GTP cyclohydrolase 1 of Campylobacter jejuni subsp. doylei (strain ATCC BAA-1458 / RM4099 / 269.97).